The chain runs to 257 residues: 4-hydroxy-tetrahydrodipicolinate reductase (257 aa).

7–12 (GCLGRM) provides a ligand contact to NAD(+). Residue R34 coordinates NADP(+). Residues 96 to 98 (GTT) and 117 to 120 (SCNM) contribute to the NAD(+) site. The active-site Proton donor/acceptor is H149. H150 serves as a coordination point for (S)-2,3,4,5-tetrahydrodipicolinate. The active-site Proton donor is the K153. 159–160 (GT) contacts (S)-2,3,4,5-tetrahydrodipicolinate.

It belongs to the DapB family.

It is found in the cytoplasm. The catalysed reaction is (S)-2,3,4,5-tetrahydrodipicolinate + NAD(+) + H2O = (2S,4S)-4-hydroxy-2,3,4,5-tetrahydrodipicolinate + NADH + H(+). It catalyses the reaction (S)-2,3,4,5-tetrahydrodipicolinate + NADP(+) + H2O = (2S,4S)-4-hydroxy-2,3,4,5-tetrahydrodipicolinate + NADPH + H(+). It participates in amino-acid biosynthesis; L-lysine biosynthesis via DAP pathway; (S)-tetrahydrodipicolinate from L-aspartate: step 4/4. In terms of biological role, catalyzes the conversion of 4-hydroxy-tetrahydrodipicolinate (HTPA) to tetrahydrodipicolinate. The sequence is that of 4-hydroxy-tetrahydrodipicolinate reductase from Anaplasma marginale (strain St. Maries).